The sequence spans 387 residues: 3-ketoacyl-CoA thiolase (387 aa).

Catalysis depends on C91, which acts as the Acyl-thioester intermediate. Residues H343 and C373 each act as proton acceptor in the active site.

It belongs to the thiolase-like superfamily. Thiolase family. Heterotetramer of two alpha chains (FadB) and two beta chains (FadA).

It is found in the cytoplasm. The catalysed reaction is an acyl-CoA + acetyl-CoA = a 3-oxoacyl-CoA + CoA. It functions in the pathway lipid metabolism; fatty acid beta-oxidation. Catalyzes the final step of fatty acid oxidation in which acetyl-CoA is released and the CoA ester of a fatty acid two carbons shorter is formed. The polypeptide is 3-ketoacyl-CoA thiolase (Aliivibrio salmonicida (strain LFI1238) (Vibrio salmonicida (strain LFI1238))).